Here is a 363-residue protein sequence, read N- to C-terminus: tRNA(Met) cytidine acetate ligase (363 aa).

Residues 7–20, Gly96, Asn152, and Arg175 contribute to the ATP site; that span reads IAEFNPFHNGHKYL.

It belongs to the TmcAL family.

The protein localises to the cytoplasm. It carries out the reaction cytidine(34) in elongator tRNA(Met) + acetate + ATP = N(4)-acetylcytidine(34) in elongator tRNA(Met) + AMP + diphosphate. Catalyzes the formation of N(4)-acetylcytidine (ac(4)C) at the wobble position of elongator tRNA(Met), using acetate and ATP as substrates. First activates an acetate ion to form acetyladenylate (Ac-AMP) and then transfers the acetyl group to tRNA to form ac(4)C34. The sequence is that of tRNA(Met) cytidine acetate ligase from Streptococcus thermophilus (strain ATCC BAA-491 / LMD-9).